Reading from the N-terminus, the 390-residue chain is LL-diaminopimelate aminotransferase 2 (390 aa).

The substrate site is built by Tyr-13 and Gly-38. Residues Tyr-67, 102-103, Tyr-127, Asn-177, Tyr-208, and 236-238 each bind pyridoxal 5'-phosphate; these read SK and SLS. 3 residues coordinate substrate: Lys-103, Tyr-127, and Asn-177. Lys-239 carries the N6-(pyridoxal phosphate)lysine modification. Arg-247 serves as a coordination point for pyridoxal 5'-phosphate. Substrate is bound at residue Arg-365.

The protein belongs to the class-I pyridoxal-phosphate-dependent aminotransferase family. LL-diaminopimelate aminotransferase subfamily. Homodimer. It depends on pyridoxal 5'-phosphate as a cofactor.

The enzyme catalyses (2S,6S)-2,6-diaminopimelate + 2-oxoglutarate = (S)-2,3,4,5-tetrahydrodipicolinate + L-glutamate + H2O + H(+). It functions in the pathway amino-acid biosynthesis; L-lysine biosynthesis via DAP pathway; LL-2,6-diaminopimelate from (S)-tetrahydrodipicolinate (aminotransferase route): step 1/1. In terms of biological role, involved in the synthesis of meso-diaminopimelate (m-DAP or DL-DAP), required for both lysine and peptidoglycan biosynthesis. Catalyzes the direct conversion of tetrahydrodipicolinate to LL-diaminopimelate. The protein is LL-diaminopimelate aminotransferase 2 of Nostoc sp. (strain PCC 7120 / SAG 25.82 / UTEX 2576).